An 878-amino-acid polypeptide reads, in one-letter code: E3 ubiquitin-protein ligase SH3RF3 (878 aa).

The tract at residues 19–40 is disordered; sequence RGEGEDRQGEQQRGAQARTEED. The RING-type zinc-finger motif lies at 52 to 93; sequence CSVCLERLDTTAKVLPCQHTFCRRCLESIVCSRHELRCPECR. The disordered stretch occupies residues 120 to 145; it reads PRTGASPGSSPPARPGPGTFSALAGG. 2 consecutive SH3 domains span residues 187-246 and 249-312; these read SQLP…CVRP and QALP…LNDS. The tract at residues 364-433 is interaction with RAC1; sequence RVDSKKNAKK…TVPTQDSSSA (70 aa). Phosphoserine is present on Ser-395. The SH3 3 domain occupies 458–519; that stretch reads LPLNVYLALY…PGNYVTPVSR (62 aa). Disordered stretches follow at residues 574–659 and 688–758; these read QHPA…CPRP and PISG…MGPE. 4 stretches are compositionally biased toward polar residues: residues 590-609, 618-633, 643-653, and 690-699; these read AQPT…THAS, ATVS…SRLP, ASPQHGQQSPA, and SGLSTPSLIN. Basic and acidic residues predominate over residues 703–716; the sequence is KPDDKKNEKKEKKS. Polar residues predominate over residues 741 to 752; sequence HDPQSAMDTSLQ. At Ser-792 the chain carries Phosphoserine. Residues 819–878 enclose the SH3 4 domain; sequence LPRERYRVVVSYPPQSEAEIELKEGDIVFVHKKHEDGWFKGTLQRNGRTGLFPGSFVESF.

It belongs to the SH3RF family. Interacts (via SH3 domain 3) with PAK2. Interacts with RAC1 (GTP-bound form). Post-translationally, autoubiquitinated.

It carries out the reaction S-ubiquitinyl-[E2 ubiquitin-conjugating enzyme]-L-cysteine + [acceptor protein]-L-lysine = [E2 ubiquitin-conjugating enzyme]-L-cysteine + N(6)-ubiquitinyl-[acceptor protein]-L-lysine.. The protein operates within protein modification; protein ubiquitination. Its function is as follows. Has E3 ubiquitin-protein ligase activity. The polypeptide is E3 ubiquitin-protein ligase SH3RF3 (Sh3rf3) (Mus musculus (Mouse)).